The chain runs to 295 residues: Pyridoxal 5'-phosphate synthase subunit PdxS (295 aa).

Aspartate 25 is a binding site for D-ribose 5-phosphate. Lysine 82 functions as the Schiff-base intermediate with D-ribose 5-phosphate in the catalytic mechanism. A D-ribose 5-phosphate-binding site is contributed by glycine 154. Arginine 166 contributes to the D-glyceraldehyde 3-phosphate binding site. D-ribose 5-phosphate is bound by residues glycine 215 and 236–237; that span reads GS.

Belongs to the PdxS/SNZ family. In terms of assembly, in the presence of PdxT, forms a dodecamer of heterodimers.

The enzyme catalyses aldehydo-D-ribose 5-phosphate + D-glyceraldehyde 3-phosphate + L-glutamine = pyridoxal 5'-phosphate + L-glutamate + phosphate + 3 H2O + H(+). Its pathway is cofactor biosynthesis; pyridoxal 5'-phosphate biosynthesis. In terms of biological role, catalyzes the formation of pyridoxal 5'-phosphate from ribose 5-phosphate (RBP), glyceraldehyde 3-phosphate (G3P) and ammonia. The ammonia is provided by the PdxT subunit. Can also use ribulose 5-phosphate and dihydroxyacetone phosphate as substrates, resulting from enzyme-catalyzed isomerization of RBP and G3P, respectively. This Bacillus cereus (strain Q1) protein is Pyridoxal 5'-phosphate synthase subunit PdxS.